Here is a 381-residue protein sequence, read N- to C-terminus: Selenoprotein P (381 aa).

An N-terminal signal peptide occupies residues 1–19 (MWRSLGLALALCLLPLGGT). N-linked (GlcNAc...) asparagine glycosylation occurs at N46. A non-standard amino acid (selenocysteine) is located at residue U59. 3 N-linked (GlcNAc...) asparagine glycosylation sites follow: N83, N119, and N128. Positions 202 to 268 (SPHYHHEHHH…ENRDMPGSED (67 aa)) are disordered. The span at 204–217 (HYHHEHHHNHRHQH) shows a compositional bias: basic residues. Residues 218-229 (LGSSELSENQQP) are compositionally biased toward polar residues. Over residues 243–255 (LHHHHKHKGQHRQ) the composition is skewed to basic residues. The residue at position 266 (S266) is a Phosphoserine. 2 non-standard amino acids (selenocysteine) are found at residues U318 and U330. An N-linked (GlcNAc...) asparagine glycan is attached at N338. Non-standard amino acids (selenocysteine) are located at U345, U352, U367, U369, U376, and U378. Positions 352–381 (UQISQQLIPTEASTSURUKNQAKKUEUPSN) are disordered. The segment covering 353–369 (QISQQLIPTEASTSURU) has biased composition (polar residues).

It belongs to the selenoprotein P family. In terms of processing, phosphorylation sites are present in the extracellular medium.

The protein resides in the secreted. In terms of biological role, might be responsible for some of the extracellular antioxidant defense properties of selenium or might be involved in the transport of selenium. May supply selenium to tissues such as brain and testis. The sequence is that of Selenoprotein P from Pongo abelii (Sumatran orangutan).